Reading from the N-terminus, the 670-residue chain is Protein ACCELERATED CELL DEATH 6 (670 aa).

Residues 1–456 lie on the Cytoplasmic side of the membrane; sequence MDSSGADLDR…PNYIFHERWT (456 aa). Residues 18–47 are disordered; the sequence is LVSHDQRKDFSHSGGVGTTSPTGDTEPVPK. ANK repeat units follow at residues 66–95, 100–129, 134–163, 182–211, 216–248, 260–290, 295–325, 329–358, 363–391, and 399–428; these read EMTPEIFGGMSNGEKECLEKLRSNGTPMER, TGDSILHIAAKWGHLELVKEIIFECPCLLF, SRQTPLHVATHGGHTKVVEALVASVTSALA, DGNTALYYAIEGRYLEMATCLVNADKDAPF, KGISSLYEAVDAGNKFEDLVKAILKTTDDNVDR, QGNKHLAHVALKAKSIGVLDVILDEYPSLMD, DGRTCLSYGASIGYYKGLCNILNRSTKGVYV, DGSFPIHSAAKNEHYEIIKEFIKRCPASKY, LGQNILHVAAKNEASLTAYMLMHDKDTKH, and DGNTPLHLAVMNWDFDSITCLASRNHEILK. A helical transmembrane segment spans residues 457-477; sequence LALLLYAIHSSGFESVKSLTI. Residues 478–492 are Extracellular-facing; it reads QSVPLDPKKNRHYVN. Residues 493-513 form a helical membrane-spanning segment; sequence ALLVVAALVATVTFAAGFTIP. At 514–537 the chain is on the cytoplasmic side; sequence GGYISDSKKPNLGRATLATNPTLF. The helical transmembrane segment at 538–558 threads the bilayer; that stretch reads IFLLFDILAMQSSVATICTLI. Over 559 to 577 the chain is Extracellular; the sequence is WAQLGDLALILKSLHVALP. A helical transmembrane segment spans residues 578 to 598; that stretch reads LLLFSLLCMPVAFLFGVITAI. At 599 to 602 the chain is on the cytoplasmic side; that stretch reads AHVK. A helical transmembrane segment spans residues 603-623; that stretch reads WLLVTISIISGGFFLFAIFIL. At 624-638 the chain is on the extracellular side; sequence GPHVMLQRSHLPPSS. Residues 639–659 form a helical membrane-spanning segment; it reads GIFLKTFMLTIDISELFVILI. Topologically, residues 660 to 670 are cytoplasmic; sequence KACFGCVACSE.

In terms of assembly, component of large complexes containing, at least, FLS2, HSP70 and ACD6 in endoplasmic reticulum, plasma membrane and soluble fraction. Associated with HSP70 proteins during endoplasmic reticulum-associated degradation (ERAD). Reduced complex levels upon benzothiazole (BTH) treatment. Ubiquitinated. As to expression, basal expression requires light and salicylic acid (SA).

The protein resides in the cell membrane. It is found in the endoplasmic reticulum membrane. Its function is as follows. Dose-dependent activator of the defense response against virulent pathogens, including bacteria, fungi and oomycetes, that acts in a positive feedback loop with the defense signal salicylic acid (SA). Regulates the salicylic acid (SA) signaling pathway leading to cell death and modulating cell fate (e.g. cell enlargement and/or cell division). In response to SA signaling, triggers the accumulation of FLS2 at the plasma membrane, thus priming defenses. Involved in SA-dependent freezing signaling and tolerance. In Arabidopsis thaliana (Mouse-ear cress), this protein is Protein ACCELERATED CELL DEATH 6.